A 335-amino-acid polypeptide reads, in one-letter code: Fructose-1,6-bisphosphatase class 1 1 (335 aa).

Positions 92, 114, 116, and 117 each coordinate Mg(2+). Substrate is bound by residues 117-120 (DGSS), Asn-209, and Lys-275. Glu-281 lines the Mg(2+) pocket.

This sequence belongs to the FBPase class 1 family. Homotetramer. The cofactor is Mg(2+).

It localises to the cytoplasm. The enzyme catalyses beta-D-fructose 1,6-bisphosphate + H2O = beta-D-fructose 6-phosphate + phosphate. The protein operates within carbohydrate biosynthesis; gluconeogenesis. This chain is Fructose-1,6-bisphosphatase class 1 1, found in Polaromonas naphthalenivorans (strain CJ2).